The chain runs to 132 residues: Ribosome-binding factor A (132 aa).

The interval 113 to 132 (EANSTRAKDDDEADAPAKDD) is disordered.

This sequence belongs to the RbfA family. Monomer. Binds 30S ribosomal subunits, but not 50S ribosomal subunits or 70S ribosomes.

Its subcellular location is the cytoplasm. Functionally, one of several proteins that assist in the late maturation steps of the functional core of the 30S ribosomal subunit. Associates with free 30S ribosomal subunits (but not with 30S subunits that are part of 70S ribosomes or polysomes). Required for efficient processing of 16S rRNA. May interact with the 5'-terminal helix region of 16S rRNA. This Burkholderia ambifaria (strain MC40-6) protein is Ribosome-binding factor A.